The primary structure comprises 453 residues: Acyl-coenzyme A thioesterase 2, mitochondrial (453 aa).

A mitochondrion-targeting transit peptide spans 1 to 42 (MVASSFAVLRASRLCQQDWKSWARLFVPPPLSTGGRTTWART). Lys-83 is subject to N6-acetyllysine. Active-site charge relay system residues include Ser-273, Asp-365, and His-399. Lys-447 carries the post-translational modification N6-succinyllysine.

This sequence belongs to the C/M/P thioester hydrolase family. As to quaternary structure, monomer. As to expression, highly expressed in brown and white adipose tissue, muscle, heart, kidney, lung, adrenal gland and spleen; weakly expressed in intestine, testis and brain.

The protein localises to the mitochondrion matrix. It carries out the reaction hexadecanoyl-CoA + H2O = hexadecanoate + CoA + H(+). The catalysed reaction is tetradecanoyl-CoA + H2O = tetradecanoate + CoA + H(+). It catalyses the reaction octadecanoyl-CoA + H2O = octadecanoate + CoA + H(+). The enzyme catalyses eicosanoyl-CoA + H2O = eicosanoate + CoA + H(+). It carries out the reaction decanoyl-CoA + H2O = decanoate + CoA + H(+). The catalysed reaction is dodecanoyl-CoA + H2O = dodecanoate + CoA + H(+). It catalyses the reaction (9Z)-octadecenoyl-CoA + H2O = (9Z)-octadecenoate + CoA + H(+). The enzyme catalyses (9Z)-hexadecenoyl-CoA + H2O = (9Z)-hexadecenoate + CoA + H(+). It carries out the reaction (9E)-octadecenoyl-CoA + H2O = (9E)-octadecenoate + CoA + H(+). The catalysed reaction is (9Z,12Z)-octadecadienoyl-CoA + H2O = (9Z,12Z)-octadecadienoate + CoA + H(+). It participates in lipid metabolism; fatty acid metabolism. Functionally, catalyzes the hydrolysis of acyl-CoAs into free fatty acids and coenzyme A (CoASH), regulating their respective intracellular levels. Displays higher activity toward long chain acyl CoAs (C14-C20). The enzyme is involved in enhancing the hepatic fatty acid oxidation in mitochondria. In Mus musculus (Mouse), this protein is Acyl-coenzyme A thioesterase 2, mitochondrial (Acot2).